A 643-amino-acid polypeptide reads, in one-letter code: MDLYSELTAKYQTVPAIATEIINLEAILNLPKPTEAFMSDIHGEYNAFQHVLRNGSGNVKSKIRSCFRDEMTEATLQRFAFLVYYPSERMAAIHREMAGDDLQQWYLTTFRRLIRLLAFTATKYTRSKVRKAMAPEFVYITEELLYNDADTPDKLAYYWQIIRNLIVLEQADQWIAATCQTIQRLTVDHFHVVGDIYDRGPAPDQVVESLIRRDRRHSVDIQWGNHDILWIGGAAGSALCIANLVRISARYNNLSILEDVYGINLRHLARLAEQYYQDNPAFSPKMERSDRPITEAERLQITQIHQAIAMIQFKLEGPVIKRRPEFDMDHRLVLEKLAPDFSTIKLNGDTYTIENGCFATVDPADPYKLLPEEQEVIDSLVESFTHSEKLHRHMDFLLDHGSMYLRYNRNLLLHGCVPVDEDGNFIGLTIKGTTYTGRQLFDMLEANLRLAYSQPTENADLATDLMWYLWTGPNSPLFGKHDMTTFERYFISDPKAHVEGRNPYYHLRKDPEFIKKILAEFVLDPEVGHVINGHTPVKKGTDPIMANNKMIVIDGGFSKPYQKTTGIGGYTLLDNSYGMQLVTHQPFTTKADAITNLTDIISTRRVVETEARRRTVAETDIGTELQDEVEVLKRRLGELREED.

The protein belongs to the FBPase class 3 family. The cofactor is Mn(2+).

It carries out the reaction beta-D-fructose 1,6-bisphosphate + H2O = beta-D-fructose 6-phosphate + phosphate. It participates in carbohydrate biosynthesis; gluconeogenesis. This chain is Fructose-1,6-bisphosphatase class 3, found in Lacticaseibacillus paracasei (strain ATCC 334 / BCRC 17002 / CCUG 31169 / CIP 107868 / KCTC 3260 / NRRL B-441) (Lactobacillus paracasei).